The chain runs to 132 residues: Large ribosomal subunit protein bL19 (132 aa).

This sequence belongs to the bacterial ribosomal protein bL19 family.

Functionally, this protein is located at the 30S-50S ribosomal subunit interface and may play a role in the structure and function of the aminoacyl-tRNA binding site. The protein is Large ribosomal subunit protein bL19 of Persephonella marina (strain DSM 14350 / EX-H1).